A 147-amino-acid polypeptide reads, in one-letter code: UPF0306 protein YPTB0506 (147 aa).

It belongs to the UPF0306 family.

The chain is UPF0306 protein YPTB0506 from Yersinia pseudotuberculosis serotype I (strain IP32953).